The chain runs to 388 residues: MSEQIVTPDTAALTVPNKDAKINLLDLNRQQMREFFKNMGEKPFRADQVMKWMYHYCCDDFDEMTDINKVLRGKLKEVAEIRAPEVVEEQRSTDGTIKWAIAVGDQRVETVYIPEEDRATLCVSSQVGCALECKFCSTAQQGFNRNLRVSEIIGQVWRAAKIVGAVKTTGVRPITNVVMMGMGEPLLNLNNVVPAMEIMLDDFGFGLSKRRVTLSTSGVVPALDKLGDMIDVALAISLHAPNDTIRDEIVPINKKYNIETFLNSVRGYISKSNANQGRVTIEYVMLDHVNDGTEHAHELAALLKDTPCKINLIPWNPFPGAPYGRSSNSRIDRFSKVLMEYGFTTIVRKTRGDDIDAACGQLAGDVIDRTKRTLRKRMQGEAIDVKAV.

Catalysis depends on Glu-109, which acts as the Proton acceptor. A Radical SAM core domain is found at 115–354 (EEDRATLCVS…TIVRKTRGDD (240 aa)). A disulfide bridge links Cys-122 with Cys-359. [4Fe-4S] cluster-binding residues include Cys-129, Cys-133, and Cys-136. Residues 183–184 (GE), Ser-215, 237–239 (SLH), and Asn-316 each bind S-adenosyl-L-methionine. Cys-359 serves as the catalytic S-methylcysteine intermediate.

This sequence belongs to the radical SAM superfamily. RlmN family. [4Fe-4S] cluster is required as a cofactor.

The protein localises to the cytoplasm. The enzyme catalyses adenosine(2503) in 23S rRNA + 2 reduced [2Fe-2S]-[ferredoxin] + 2 S-adenosyl-L-methionine = 2-methyladenosine(2503) in 23S rRNA + 5'-deoxyadenosine + L-methionine + 2 oxidized [2Fe-2S]-[ferredoxin] + S-adenosyl-L-homocysteine. It catalyses the reaction adenosine(37) in tRNA + 2 reduced [2Fe-2S]-[ferredoxin] + 2 S-adenosyl-L-methionine = 2-methyladenosine(37) in tRNA + 5'-deoxyadenosine + L-methionine + 2 oxidized [2Fe-2S]-[ferredoxin] + S-adenosyl-L-homocysteine. Functionally, specifically methylates position 2 of adenine 2503 in 23S rRNA and position 2 of adenine 37 in tRNAs. m2A2503 modification seems to play a crucial role in the proofreading step occurring at the peptidyl transferase center and thus would serve to optimize ribosomal fidelity. The sequence is that of Dual-specificity RNA methyltransferase RlmN from Klebsiella pneumoniae (strain 342).